The following is a 1603-amino-acid chain: Protein TIC 214 (1603 aa).

The next 6 membrane-spanning stretches (helical) occupy residues 11–31 (VLWA…LFGL), 58–78 (LSGT…FLSI), 86–106 (LLLK…FYWY), 131–151 (IFFD…SPIL), 167–187 (LFVL…FNCI), and 213–233 (FSIF…VPFF).

The protein belongs to the TIC214 family. Part of the Tic complex.

The protein localises to the plastid. It is found in the chloroplast inner membrane. Involved in protein precursor import into chloroplasts. May be part of an intermediate translocation complex acting as a protein-conducting channel at the inner envelope. The chain is Protein TIC 214 from Physcomitrium patens (Spreading-leaved earth moss).